The sequence spans 198 residues: dITP/XTP pyrophosphatase (198 aa).

11–16 (THNPGK) lines the substrate pocket. E44 and D73 together coordinate Mg(2+). The Proton acceptor role is filled by D73. Substrate-binding positions include S74, 156–159 (FGYD), K179, and 184–185 (HR).

This sequence belongs to the HAM1 NTPase family. As to quaternary structure, homodimer. Requires Mg(2+) as cofactor.

The enzyme catalyses XTP + H2O = XMP + diphosphate + H(+). It carries out the reaction dITP + H2O = dIMP + diphosphate + H(+). It catalyses the reaction ITP + H2O = IMP + diphosphate + H(+). Functionally, pyrophosphatase that catalyzes the hydrolysis of nucleoside triphosphates to their monophosphate derivatives, with a high preference for the non-canonical purine nucleotides XTP (xanthosine triphosphate), dITP (deoxyinosine triphosphate) and ITP. Seems to function as a house-cleaning enzyme that removes non-canonical purine nucleotides from the nucleotide pool, thus preventing their incorporation into DNA/RNA and avoiding chromosomal lesions. The chain is dITP/XTP pyrophosphatase (ysnA) from Bacillus subtilis (strain 168).